The chain runs to 201 residues: Dermatopontin (201 aa).

Positions M1 to G18 are cleaved as a signal peptide. Residue Q19 is modified to Pyrrolidone carboxylic acid. Y23 carries the post-translational modification Sulfotyrosine. Tandem repeats lie at residues P26–P79, D70–Y75, T80–Y135, and D125–F130. The segment at P26–F186 is 2 X 53-55 AA tandem repeats. Cystine bridges form between C50-C77, C90-C132, C106-C133, C139-C196, and C143-C189. The 3 X 6 AA repeats of D-R-[EQ]-W-[NQK]-[FY] stretch occupies residues D70–F186. Sulfotyrosine is present on residues Y162, Y164, Y166, and Y167. One copy of the 3-3 repeat lies at D181–F186. Y194 is modified (sulfotyrosine).

The protein belongs to the dermatopontin family. Interacts with TGFB1, DCN and collagen. Post-translationally, sulfated on tyrosine residue(s). As to expression, expressed in fibroblasts, heart, skeletal muscle, brain and pancreas. Expressed at an intermediate level in lung and kidney, and at a low level in liver and placenta. Expressed at a lower level in fibroblasts from hypertrophic scar lesional skin and in fibroblasts from patients with systemic sclerosis than in normal skin fibroblasts.

The protein resides in the secreted. The protein localises to the extracellular space. It localises to the extracellular matrix. In terms of biological role, seems to mediate adhesion by cell surface integrin binding. May serve as a communication link between the dermal fibroblast cell surface and its extracellular matrix environment. Enhances TGFB1 activity. Inhibits cell proliferation. Accelerates collagen fibril formation, and stabilizes collagen fibrils against low-temperature dissociation. The polypeptide is Dermatopontin (DPT) (Homo sapiens (Human)).